We begin with the raw amino-acid sequence, 673 residues long: RAS guanyl-releasing protein 4 (673 aa).

Basic residues-rich tracts occupy residues 1 to 10 (MNRKDIKRKS) and 20 to 32 (GRGR…RHKT). 2 disordered regions span residues 1–34 (MNRK…KTCP) and 164–188 (LGDA…PGLG). The N-terminal Ras-GEF domain maps to 49 to 175 (GVLSESSCSE…DASSLLSPGG (127 aa)). The segment covering 164–173 (LGDASSLLSP) has biased composition (low complexity). The Ras-GEF domain maps to 201 to 432 (ETEELAQHLT…YELSYAREPR (232 aa)). The 36-residue stretch at 466–501 (HVEQLVESVFKNYDPEGRGSISLEDFERLSGNFPFA) folds into the EF-hand domain. The segment at 540–590 (LHAFQEVTFRKPTFCHSCSGFLWGVTKQGYRCRDCGLCCHRHCRDQVRVEC) adopts a Phorbol-ester/DAG-type zinc-finger fold. The interval 592-633 (KRPETKGDPGPPGAPVPATSLPPANCGSEESLSYTLSPDPES) is disordered.

It belongs to the RASGRP family. In terms of tissue distribution, expressed by mast cells and their progenitors (at protein level). Expressed by dendritic cells. Expressed in neutrophils.

It is found in the cytoplasm. Its subcellular location is the cell membrane. In terms of biological role, functions as a cation- and diacylglycerol (DAG)-regulated nucleotide exchange factor activating Ras through the exchange of bound GDP for GTP. In neutrophils, participates in a phospholipase C-activating N-formyl peptide-activated GPCR (G protein-coupled receptor) signaling pathway by promoting Ras-mediated activation of PIK3CG/PI3Kgamma to promote neutrophil functional responses. In CD117(+) dendritic cells and mast cells, participates in an lipopolysaccharide (LPS)-activated signaling pathway that stimulates the production of interferon-gamma and other pro-inflammatory cytokines by natural killer (NK) cells. May function in mast cell differentiation. Does not appear to be required for the development of B-cells, DC-cells, T-cells, or NK-cells. Functionally, binds diacylglycerol (DAG). Its function is as follows. Unable to bind diacylglycerol (DAG). The protein is RAS guanyl-releasing protein 4 (Rasgrp4) of Mus musculus (Mouse).